The following is a 234-amino-acid chain: (5-formylfuran-3-yl)methyl phosphate synthase (234 aa).

Lys-27 functions as the Schiff-base intermediate with substrate in the catalytic mechanism. Residue Lys-85 is the Proton acceptor of the active site.

It belongs to the MfnB family.

It catalyses the reaction 2 D-glyceraldehyde 3-phosphate = 4-(hydroxymethyl)-2-furancarboxaldehyde phosphate + phosphate + 2 H2O. It participates in cofactor biosynthesis; methanofuran biosynthesis. Its function is as follows. Catalyzes the formation of 4-(hydroxymethyl)-2-furancarboxaldehyde phosphate (4-HFC-P) from two molecules of glyceraldehyde-3-P (GA-3-P). This is (5-formylfuran-3-yl)methyl phosphate synthase from Methanosarcina barkeri (strain Fusaro / DSM 804).